Reading from the N-terminus, the 376-residue chain is 3-dehydroquinate synthase (376 aa).

Residues 115-119 (GVIGD), 139-140 (TS), K152, and K161 each bind NAD(+). Zn(2+) contacts are provided by E194, H256, and H275.

Belongs to the sugar phosphate cyclases superfamily. Dehydroquinate synthase family. Co(2+) is required as a cofactor. It depends on Zn(2+) as a cofactor. Requires NAD(+) as cofactor.

The protein localises to the cytoplasm. It carries out the reaction 7-phospho-2-dehydro-3-deoxy-D-arabino-heptonate = 3-dehydroquinate + phosphate. It participates in metabolic intermediate biosynthesis; chorismate biosynthesis; chorismate from D-erythrose 4-phosphate and phosphoenolpyruvate: step 2/7. Catalyzes the conversion of 3-deoxy-D-arabino-heptulosonate 7-phosphate (DAHP) to dehydroquinate (DHQ). The polypeptide is 3-dehydroquinate synthase (Rhizobium johnstonii (strain DSM 114642 / LMG 32736 / 3841) (Rhizobium leguminosarum bv. viciae)).